The following is a 149-amino-acid chain: Flagellar basal-body protein FlbY (149 aa).

The basal body constitutes a major portion of the flagellar organelle and consists of five rings (E,L,P,S, and M) mounted on a central rod.

The protein resides in the bacterial flagellum basal body. The chain is Flagellar basal-body protein FlbY (flbY) from Caulobacter vibrioides (strain ATCC 19089 / CIP 103742 / CB 15) (Caulobacter crescentus).